The sequence spans 625 residues: Grainyhead-like protein 2 homolog (625 aa).

3 disordered regions span residues 1–24 (MSQESDNNKRLVALVPMPSDPPFN), 82–112 (VSKASDSQEDQEKRNCLGTSEAQSNLSGGEN), and 428–453 (EERKQNRKKGKGQASQTQCNSSSDGK). The tract at residues 1–93 (MSQESDNNKR…KASDSQEDQE (93 aa)) is transcription activation. 2 stretches are compositionally biased toward polar residues: residues 98 to 109 (LGTSEAQSNLSG) and 440 to 451 (QASQTQCNSSSD). One can recognise a Grh/CP2 DB domain in the interval 244 to 482 (SSGTFQYTLE…DLHSQPVLFI (239 aa)).

This sequence belongs to the grh/CP2 family. Grainyhead subfamily. In terms of assembly, homodimer, also forms heterodimers with GRHL1 or GRHL3. Expressed in keratinocytes (at protein level). Highly expressed in placenta, prostate, brain and kidney. Lower-level expression in a variety of epithelial tissues such as thymus, lung, salivary gland, mammary gland and digestive tract. Expressed in the cochlear. Expressed in corneal epithelial cells, but not in the endothelium or stroma.

The protein resides in the nucleus. It localises to the membrane. Transcription factor playing an important role in primary neurulation and in epithelial development. Binds directly to the consensus DNA sequence 5'-AACCGGTT-3' acting as an activator and repressor on distinct target genes. During embryogenesis, plays unique and cooperative roles with GRHL3 in establishing distinct zones of primary neurulation. Essential for closure 3 (rostral end of the forebrain), functions cooperatively with GRHL3 in closure 2 (forebrain/midbrain boundary) and posterior neuropore closure. Regulates epithelial morphogenesis acting as a target gene-associated transcriptional activator of apical junctional complex components. Up-regulates of CLDN3 and CLDN4, as well as of RAB25, which increases the CLDN4 protein and its localization at tight junctions. Comprises an essential component of the transcriptional machinery that establishes appropriate expression levels of CLDN4 and CDH1 in different types of epithelia. Exhibits functional redundancy with GRHL3 in epidermal morphogenetic events and epidermal wound repair. In lung, forms a regulatory loop with NKX2-1 that coordinates lung epithelial cell morphogenesis and differentiation. In keratinocytes, plays a role in telomerase activation during cellular proliferation, regulates TERT expression by binding to TERT promoter region and inhibiting DNA methylation at the 5'-CpG island, possibly by interfering with DNMT1 enzyme activity. In addition, impairs keratinocyte differentiation and epidermal function by inhibiting the expression of genes clustered at the epidermal differentiation complex (EDC) as well as GRHL1 and GRHL3 through epigenetic mechanisms. The chain is Grainyhead-like protein 2 homolog (GRHL2) from Homo sapiens (Human).